Reading from the N-terminus, the 545-residue chain is Signal peptide peptidase-like 4 (545 aa).

The first 25 residues, 1-25 (MGTSSPEMAAALLLVMAALAGVAAG), serve as a signal peptide directing secretion. Residues 26–193 (GDIVHQDDEA…PDRPLVDTAE (168 aa)) lie on the Lumenal side of the membrane. 2 N-linked (GlcNAc...) asparagine glycosylation sites follow: N81 and N147. Residues 90–170 (PIDCCDPPTQ…PKDAGNDLQK (81 aa)) enclose the PA domain. A helical transmembrane segment spans residues 194 to 214 (VFLWLMAVGTILCASYWSAWS). The Cytoplasmic segment spans residues 215-246 (AREAVIEQEKLLKDGHESSLNLEAGGSSGMVD). A helical membrane pass occupies residues 247-267 (INMTSAILFVVIASCFLIMLY). At 268–276 (KLMSHWFVE) the chain is on the lumenal side. The chain crosses the membrane as a helical span at residues 277–297 (LLVVIFCIGGVEGLQTCLVAL). Over 298–317 (LSRWFKPAAESFVKVPFFGA) the chain is Cytoplasmic. A helical membrane pass occupies residues 318–338 (VSYLTIAVCPFCIVFAVIWAV). Residues 339–343 (YRRMT) are Lumenal-facing. Residues 344–364 (YAWIGQDILGIALIVTVIQIV) traverse the membrane as a helical segment. Topologically, residues 365 to 373 (RIPNLKVGS) are cytoplasmic. Residues 374 to 394 (VLLSCSFLYDIFWVFISKMWF) traverse the membrane as a helical segment. Residue D383 is part of the active site. Residues 395–427 (HESVMIVVARGDKTDEDGVPMLLKIPRMFDPWG) lie on the Lumenal side of the membrane. The chain crosses the membrane as a helical span at residues 428–448 (GFSIIGFGDILLPGLLIAFAL). Residue D436 is part of the active site. Residues 449 to 460 (RYDWAAKKTLQS) are Cytoplasmic-facing. A helical membrane pass occupies residues 461–481 (GYFLWSMVAYGSGLMITYVAL). Residues 482–485 (NLMD) are Lumenal-facing. Residues 486–506 (GHGQPALLYIVPFTLGTFIAL) form a helical membrane-spanning segment. Positions 490-492 (PAL) match the PAL motif. Over 507-545 (GRKRGELRNLWTRGQPERVCTHMHMQPSPKDTNCDAVSS) the chain is Cytoplasmic.

This sequence belongs to the peptidase A22B family. In terms of processing, glycosylated.

It localises to the endosome membrane. In terms of biological role, intramembrane-cleaving aspartic protease (I-CLiP) that cleaves type II membrane signal peptides in the hydrophobic plane of the membrane. This chain is Signal peptide peptidase-like 4 (SPPL4), found in Oryza sativa subsp. japonica (Rice).